Here is a 637-residue protein sequence, read N- to C-terminus: Phosphomethylpyrimidine synthase (637 aa).

Substrate is bound by residues asparagine 242, methionine 271, tyrosine 300, histidine 336, serine 356–glycine 358, aspartate 397–arginine 400, and glutamate 436. Histidine 440 provides a ligand contact to Zn(2+). Substrate is bound at residue tyrosine 463. Residue histidine 504 participates in Zn(2+) binding. Positions 584, 587, and 592 each coordinate [4Fe-4S] cluster.

This sequence belongs to the ThiC family. As to quaternary structure, homodimer. It depends on [4Fe-4S] cluster as a cofactor.

It carries out the reaction 5-amino-1-(5-phospho-beta-D-ribosyl)imidazole + S-adenosyl-L-methionine = 4-amino-2-methyl-5-(phosphooxymethyl)pyrimidine + CO + 5'-deoxyadenosine + formate + L-methionine + 3 H(+). It participates in cofactor biosynthesis; thiamine diphosphate biosynthesis. Catalyzes the synthesis of the hydroxymethylpyrimidine phosphate (HMP-P) moiety of thiamine from aminoimidazole ribotide (AIR) in a radical S-adenosyl-L-methionine (SAM)-dependent reaction. This Janthinobacterium sp. (strain Marseille) (Minibacterium massiliensis) protein is Phosphomethylpyrimidine synthase.